A 371-amino-acid polypeptide reads, in one-letter code: Spermidine/putrescine import ATP-binding protein PotA (371 aa).

Residues 10–240 form the ABC transporter domain; the sequence is VELRNVTKSY…PKNLFVARFI (231 aa). 42-49 is an ATP binding site; sequence GPSGCGKT.

It belongs to the ABC transporter superfamily. Spermidine/putrescine importer (TC 3.A.1.11.1) family. The complex is composed of two ATP-binding proteins (PotA), two transmembrane proteins (PotB and PotC) and a solute-binding protein (PotD).

The protein localises to the cell inner membrane. The enzyme catalyses ATP + H2O + polyamine-[polyamine-binding protein]Side 1 = ADP + phosphate + polyamineSide 2 + [polyamine-binding protein]Side 1.. Part of the ABC transporter complex PotABCD involved in spermidine/putrescine import. Responsible for energy coupling to the transport system. The chain is Spermidine/putrescine import ATP-binding protein PotA from Haemophilus ducreyi (strain 35000HP / ATCC 700724).